The chain runs to 106 residues: Thioredoxin (106 aa).

The region spanning 1 to 106 is the Thioredoxin domain; sequence GATVKVTNAT…RLAAFLDASL (106 aa). The cysteines at positions 31 and 34 are disulfide-linked.

The protein belongs to the thioredoxin family.

Its function is as follows. Participates in various redox reactions through the reversible oxidation of its active center dithiol to a disulfide and catalyzes dithiol-disulfide exchange reactions. The protein is Thioredoxin (trxA) of Kitasatospora aureofaciens (Streptomyces aureofaciens).